Reading from the N-terminus, the 722-residue chain is Bifunctional UDP-N-acetylglucosamine 2-epimerase/N-acetylmannosamine kinase (722 aa).

Arg-19, Ser-23, Arg-113, His-220, and Asn-253 together coordinate UDP. Positions 259, 271, 280, and 281 each coordinate CMP-N-acetyl-beta-neuraminate. Residues Val-282, Ser-301, Ser-302, Glu-307, and Arg-321 each contribute to the UDP site. The tract at residues 406 to 722 is N-acetylmannosamine kinase; the sequence is TLSALAVDLG…VLDYTTRRIY (317 aa). Asp-413 is a binding site for Mg(2+). An N-acyl-D-mannosamine 6-phosphate is bound at residue Gly-416. ADP-binding residues include Thr-417, Asn-418, and Arg-420. Residues Gly-476, Arg-477, Thr-489, Asn-516, Asp-517, and Gly-545 each coordinate an N-acyl-D-mannosamine 6-phosphate. An N-acyl-D-mannosamine-binding residues include Gly-476, Arg-477, Thr-489, Asn-516, and Asp-517. Asp-517 is an active-site residue. Positions 566 and 569 each coordinate an N-acyl-D-mannosamine. His-569 is an an N-acyl-D-mannosamine 6-phosphate binding site. His-569, Cys-579, Cys-581, and Cys-586 together coordinate Zn(2+). Glu-588 lines the an N-acyl-D-mannosamine 6-phosphate pocket. Glu-588 contacts an N-acyl-D-mannosamine.

It in the N-terminal section; belongs to the UDP-N-acetylglucosamine 2-epimerase family. In the C-terminal section; belongs to the ROK (NagC/XylR) family. As to quaternary structure, homodimer. Homotetramer. Homohexamer. The hexameric form exhibits both enzyme activities, whereas the dimeric form only catalyzes the phosphorylation of N-acyl-D-mannosamine. Post-translationally, phosphorylated. Phosphorylation by PKC activates the UDP-N-acetylglucosamine 2-epimerase activity. Highest expression in liver and placenta. Also found in heart, brain, lung, kidney, skeletal muscle and pancreas. Isoform 1 is expressed in heart, brain, kidney, liver, placenta, lung, spleen, pancreas, skeletal muscle and colon. Isoform 2 is expressed mainly in placenta, but also in brain, kidney, liver, lung, pancreas and colon. Isoform 3 is expressed at low level in kidney, liver, placenta and colon.

The protein resides in the cytoplasm. It is found in the cytosol. It carries out the reaction UDP-N-acetyl-alpha-D-glucosamine + H2O = aldehydo-N-acetyl-D-mannosamine + UDP + H(+). The catalysed reaction is an N-acyl-D-mannosamine + ATP = an N-acyl-D-mannosamine 6-phosphate + ADP + H(+). Its pathway is amino-sugar metabolism; N-acetylneuraminate biosynthesis. Its activity is regulated as follows. The UDP-N-acetylglucosamine 2-epimerase activity, in contrast to the N-acetylmannosamine kinase activity, exhibits allosteric regulation by cytidine monophosphate-N-acetylneuraminic acid (CMP-Neu5Ac), the end product of neuraminic acid biosynthesis. Moreover, the activity is contingent upon the oligomeric state of the enzyme. The monomeric form is inactive, while the dimeric form selectively catalyzes the phosphorylation of N-acetylmannosamine. The hexameric form, on the other hand, demonstrates full proficiency in both enzyme activities. Furthermore, the UDP-N-acetylglucosamine 2-epimerase activity is increased by PKC-mediated phosphorylation. Its function is as follows. Bifunctional enzyme that possesses both UDP-N-acetylglucosamine 2-epimerase and N-acetylmannosamine kinase activities, and serves as the initiator of the biosynthetic pathway leading to the production of N-acetylneuraminic acid (NeuAc), a critical precursor in the synthesis of sialic acids. By catalyzing this pivotal and rate-limiting step in sialic acid biosynthesis, this enzyme assumes a pivotal role in governing the regulation of cell surface sialylation, playing a role in embryonic angiogenesis. Sialic acids represent a category of negatively charged sugars that reside on the surface of cells as terminal components of glycoconjugates and mediate important functions in various cellular processes, including cell adhesion, signal transduction, and cellular recognition. The chain is Bifunctional UDP-N-acetylglucosamine 2-epimerase/N-acetylmannosamine kinase from Homo sapiens (Human).